Here is a 383-residue protein sequence, read N- to C-terminus: MAKHLFTSESVSEGHPDKIADQISDAVLDAILEQDPKARVACETYVKTGMVLVGGEITTSAWVDIEEITRRTVRDIGYVNSEMGFDANSCAVLSAIGKQSPDINQGVDRRDPLEQGAGDQGLMFGYATNETDVLMPAPVTYAHRLVHRQSEVRKSGSLPWLRPDAKSQVTFLYDDGKIAGIDAVVLSTQHSEDVSQKDLHEAVMEEIIKPVLPAEWLSASTKYFINPTGRFVIGGPMGDCGLTGRKIIVDTYGGAARHGGGAFSGKDPSKVDRSAAYAARYVAKNIVAAGLADRCEIQVSYAIGVAEPTSIMIETFGTEKVSNEQLTLLVREFFDLRPYGLIQMLDLLHPIYQETAAYGHFGREHFPWEKTDKAAQLREAAGL.

His15 lines the ATP pocket. Asp17 serves as a coordination point for Mg(2+). Glu43 lines the K(+) pocket. L-methionine contacts are provided by Glu56 and Gln99. Positions 99 to 109 (QSPDINQGVDR) are flexible loop. ATP contacts are provided by residues 164 to 166 (DAK), 230 to 231 (RF), Asp239, 245 to 246 (RK), Ala262, and Lys266. Residue Asp239 coordinates L-methionine. Lys270 contributes to the L-methionine binding site.

Belongs to the AdoMet synthase family. Homotetramer; dimer of dimers. The cofactor is Mg(2+). K(+) serves as cofactor.

It localises to the cytoplasm. The catalysed reaction is L-methionine + ATP + H2O = S-adenosyl-L-methionine + phosphate + diphosphate. It functions in the pathway amino-acid biosynthesis; S-adenosyl-L-methionine biosynthesis; S-adenosyl-L-methionine from L-methionine: step 1/1. Functionally, catalyzes the formation of S-adenosylmethionine (AdoMet) from methionine and ATP. The overall synthetic reaction is composed of two sequential steps, AdoMet formation and the subsequent tripolyphosphate hydrolysis which occurs prior to release of AdoMet from the enzyme. This chain is S-adenosylmethionine synthase, found in Pectobacterium atrosepticum (strain SCRI 1043 / ATCC BAA-672) (Erwinia carotovora subsp. atroseptica).